We begin with the raw amino-acid sequence, 146 residues long: NADH-quinone oxidoreductase subunit A (146 aa).

Transmembrane regions (helical) follow at residues 14 to 34 (FAVF…GAFF), 66 to 86 (FYLV…LYAW), and 96 to 116 (VGFI…VYLV).

It belongs to the complex I subunit 3 family. In terms of assembly, NDH-1 is composed of 13 different subunits. Subunits NuoA, H, J, K, L, M, N constitute the membrane sector of the complex.

The protein resides in the cell inner membrane. It catalyses the reaction a quinone + NADH + 5 H(+)(in) = a quinol + NAD(+) + 4 H(+)(out). In terms of biological role, NDH-1 shuttles electrons from NADH, via FMN and iron-sulfur (Fe-S) centers, to quinones in the respiratory chain. The immediate electron acceptor for the enzyme in this species is believed to be ubiquinone. Couples the redox reaction to proton translocation (for every two electrons transferred, four hydrogen ions are translocated across the cytoplasmic membrane), and thus conserves the redox energy in a proton gradient. The protein is NADH-quinone oxidoreductase subunit A of Serratia proteamaculans (strain 568).